Consider the following 310-residue polypeptide: Pirin-like protein At1g50590 (310 aa).

This sequence belongs to the pirin family.

Its subcellular location is the nucleus. The chain is Pirin-like protein At1g50590 from Arabidopsis thaliana (Mouse-ear cress).